Consider the following 169-residue polypeptide: Endoribonuclease YbeY (169 aa).

His-128, His-132, and His-138 together coordinate Zn(2+).

This sequence belongs to the endoribonuclease YbeY family. Zn(2+) serves as cofactor.

The protein localises to the cytoplasm. Its function is as follows. Single strand-specific metallo-endoribonuclease involved in late-stage 70S ribosome quality control and in maturation of the 3' terminus of the 16S rRNA. In Rhizorhabdus wittichii (strain DSM 6014 / CCUG 31198 / JCM 15750 / NBRC 105917 / EY 4224 / RW1) (Sphingomonas wittichii), this protein is Endoribonuclease YbeY.